We begin with the raw amino-acid sequence, 136 residues long: ATP synthase epsilon chain (136 aa).

The segment at 106-136 is disordered; the sequence is MEGQPSSPEKLKAQQQLNEARARLQASKTAD.

The protein belongs to the ATPase epsilon chain family. F-type ATPases have 2 components, CF(1) - the catalytic core - and CF(0) - the membrane proton channel. CF(1) has five subunits: alpha(3), beta(3), gamma(1), delta(1), epsilon(1). CF(0) has three main subunits: a, b and c.

The protein localises to the cellular thylakoid membrane. Produces ATP from ADP in the presence of a proton gradient across the membrane. This Synechococcus sp. (strain CC9605) protein is ATP synthase epsilon chain.